The sequence spans 236 residues: MSERKSDPDRDDSERAFFGRRKGHKLRQHQAELIDHLLPHLALDIAGEAPGNACEIFDPAASDVRLEIGFGGGEHLAAEAQNFATTGFIGCEPYVNGMAKILAQIEAGNIANIRLFAGDAAELLAWLPKASLSRIDLIHPDPWPKRRHWKRRFVQDRTIAAMARVLKVGGEFRFVCDIDDYCAWTLSHLARSADFKWLAERADDFRQPWDGYTMTRYGRKAAREGRKAAYLRFRRS.

The span at 1–17 shows a compositional bias: basic and acidic residues; sequence MSERKSDPDRDDSERAF. The disordered stretch occupies residues 1-23; the sequence is MSERKSDPDRDDSERAFFGRRKG. Glu-67, Glu-92, Asp-119, and Asp-141 together coordinate S-adenosyl-L-methionine. The active site involves Asp-141. Residues Lys-145 and Asp-177 each coordinate substrate.

The protein belongs to the class I-like SAM-binding methyltransferase superfamily. TrmB family.

The catalysed reaction is guanosine(46) in tRNA + S-adenosyl-L-methionine = N(7)-methylguanosine(46) in tRNA + S-adenosyl-L-homocysteine. Its pathway is tRNA modification; N(7)-methylguanine-tRNA biosynthesis. Catalyzes the formation of N(7)-methylguanine at position 46 (m7G46) in tRNA. The polypeptide is tRNA (guanine-N(7)-)-methyltransferase (Bradyrhizobium diazoefficiens (strain JCM 10833 / BCRC 13528 / IAM 13628 / NBRC 14792 / USDA 110)).